Here is a 220-residue protein sequence, read N- to C-terminus: Ras-related protein Rab-3A (220 aa).

Residues Ser-31, Ser-32, Val-33, Gly-34, Lys-35, Thr-36, Ser-37, Thr-48, Pro-49, Ser-53, and Thr-54 each contribute to the GTP site. Thr-36 is a Mg(2+) binding site. A Switch 1 motif is present at residues 49-58 (PAFVSTVGID). Residues Thr-54 and Asp-77 each contribute to the Mg(2+) site. Residue Gly-80 participates in GTP binding. Residues 80 to 96 (GQERYRTITTAYYRGAM) carry the Switch 2 motif. Phosphothreonine is present on Thr-86. Residues Asn-135, Lys-136, Asp-138, Ala-166, and Lys-167 each coordinate GTP. 2 positions are modified to phosphoserine: Ser-188 and Ser-190. A disordered region spans residues 194-220 (ADPAVTGAKQGPQLTDQQAPPHQDCAC). S-geranylgeranyl cysteine attachment occurs at residues Cys-218 and Cys-220. Cys-220 is modified (cysteine methyl ester).

Belongs to the small GTPase superfamily. Rab family. In terms of assembly, interacts with RIMS1 and RIMS2. Interacts with Rabphilin-3A/RPH3A and Rab effector Noc2/RPH3AL. Interacts with SYTL4. Interacts with RAB3IP. Interacts with SGSM1 and SGSM3. Interacts with SYT1. Interacts with MYH9; this interaction is essential for lysosome exocytosis and plasma membrane repair. Interacts with STXBP1; this interaction promotes RAB3A dissociation from the vesicle membrane. Interacts with SNCA. Interacts with GDI1, GDI2, CHM and CHML; phosphorylation at Thr-86 disrupts these interactions. Interacts with MADD (via uDENN domain); the GTP-bound form is preferred for interaction. Requires Mg(2+) as cofactor. Post-translationally, phosphorylation of Thr-86 in the switch II region by LRRK2 prevents the association of RAB regulatory proteins, including CHM, CHML and RAB GDP dissociation inhibitors GDI1 and GDI2.

Its subcellular location is the cytoplasm. It is found in the cytosol. It localises to the lysosome. The protein resides in the cytoplasmic vesicle. The protein localises to the secretory vesicle. Its subcellular location is the cell projection. It is found in the axon. It localises to the cell membrane. The protein resides in the presynapse. The protein localises to the postsynapse. It carries out the reaction GTP + H2O = GDP + phosphate + H(+). With respect to regulation, regulated by guanine nucleotide exchange factors (GEFs) including RAB3IL1 and MADD which promote the exchange of bound GDP for free GTP. Regulated by GTPase activating proteins (GAPs) including RAB3GAP1 and TBC1D10B which increase the GTP hydrolysis activity. Inhibited by GDP dissociation inhibitors (GDIs) which prevent Rab-GDP dissociation. Its function is as follows. The small GTPases Rab are key regulators of intracellular membrane trafficking, from the formation of transport vesicles to their fusion with membranes. Rabs cycle between an inactive GDP-bound form and an active GTP-bound form that is able to recruit to membranes different sets of downstream effectors directly responsible for vesicle formation, movement, tethering and fusion. RAB3A plays a central role in regulated exocytosis and secretion. Controls the recruitment, tethering and docking of secretory vesicles to the plasma membrane. Upon stimulation, switches to its active GTP-bound form, cycles to vesicles and recruits effectors such as RIMS1, RIMS2, Rabphilin-3A/RPH3A, RPH3AL or SYTL4 to help the docking of vesicules onto the plasma membrane. Upon GTP hydrolysis by GTPase-activating protein, dissociates from the vesicle membrane allowing the exocytosis to proceed. Stimulates insulin secretion through interaction with RIMS2 or RPH3AL effectors in pancreatic beta cells. Regulates calcium-dependent lysosome exocytosis and plasma membrane repair (PMR) via the interaction with 2 effectors, SYTL4 and myosin-9/MYH9. Acts as a positive regulator of acrosome content secretion in sperm cells by interacting with RIMS1. Also plays a role in the regulation of dopamine release by interacting with synaptotagmin I/SYT. In Sus scrofa (Pig), this protein is Ras-related protein Rab-3A (RAB3A).